Consider the following 455-residue polypeptide: DENN domain-containing protein 11 (455 aa).

An N-acetylvaline modification is found at valine 2. A uDENN domain is found at glutamate 15–histidine 187. Residues valine 21–leucine 61 are disordered. Residues tryptophan 32–arginine 41 show a composition bias toward gly residues. Position 41 is an omega-N-methylarginine (arginine 41). Positions tryptophan 214–arginine 362 constitute a cDENN domain. The dDENN domain maps to leucine 364–proline 455.

The protein belongs to the DENND11 family. As to expression, expressed within the somatodendritic compartment of neurons, is also present on dendritic growth cones, but is not found in astrocytes.

Probable guanine nucleotide exchange factor (GEF). May promote the exchange of GDP to GTP, converting inactive GDP-bound small GTPases into their active GTP-bound form. May play a role in neuritogenesis, as well as in neuronal recovery and/or restructuring in the hippocampus following transient cerebral ischemia. The sequence is that of DENN domain-containing protein 11 (Dennd11) from Rattus norvegicus (Rat).